The chain runs to 248 residues: Myelin protein P0 (248 aa).

A signal peptide spans 1–29 (MAPGAPSSSPSPILAALLFSSLVLSPALA). Positions 30-143 (IVVYTDREIY…DIVGKTSQVT (114 aa)) constitute an Ig-like V-type domain. The Extracellular segment spans residues 30 to 153 (IVVYTDREIY…LYVFEKVPTR (124 aa)). Residues C50 and C127 are joined by a disulfide bond. Residue N122 is glycosylated (N-linked (GlcNAc...) (complex) asparagine). A helical transmembrane segment spans residues 154–179 (YGVVLGAVIGGILGVVLLLLLLFYLI). Residues 180 to 248 (RYCWLRRQAA…GLGESRKDKK (69 aa)) are Cytoplasmic-facing. Phosphoserine; by PKC is present on S210. The interval 222 to 248 (MLDHSRSTKAASEKKSKGLGESRKDKK) is disordered. Residues 224–248 (DHSRSTKAASEKKSKGLGESRKDKK) show a composition bias toward basic and acidic residues. A phosphoserine mark is found at S226 and S228. S233 carries the post-translational modification Phosphoserine; by PKC. Residues S237 and S243 each carry the phosphoserine modification.

Belongs to the myelin P0 protein family. Homodimer and homotetramer. Post-translationally, N-glycosylated; contains sulfate-substituted glycan. Found only in peripheral nervous system Schwann cells.

It is found in the cell membrane. In terms of biological role, is an adhesion molecule necessary for normal myelination in the peripheral nervous system. It mediates adhesion between adjacent myelin wraps and ultimately drives myelin compaction. The chain is Myelin protein P0 (Mpz) from Mus musculus (Mouse).